Consider the following 382-residue polypeptide: ATP phosphoribosyltransferase regulatory subunit (382 aa).

It belongs to the class-II aminoacyl-tRNA synthetase family. HisZ subfamily. In terms of assembly, heteromultimer composed of HisG and HisZ subunits.

Its subcellular location is the cytoplasm. It functions in the pathway amino-acid biosynthesis; L-histidine biosynthesis; L-histidine from 5-phospho-alpha-D-ribose 1-diphosphate: step 1/9. Functionally, required for the first step of histidine biosynthesis. May allow the feedback regulation of ATP phosphoribosyltransferase activity by histidine. This is ATP phosphoribosyltransferase regulatory subunit from Burkholderia pseudomallei (strain 668).